The sequence spans 214 residues: Orotate phosphoribosyltransferase (214 aa).

Lysine 26 provides a ligand contact to 5-phospho-alpha-D-ribose 1-diphosphate. Residue 34–35 (FF) coordinates orotate. Residues 72-73 (YK), arginine 99, lysine 100, lysine 103, histidine 105, and 124-132 (DDVITAGTA) contribute to the 5-phospho-alpha-D-ribose 1-diphosphate site. Residues threonine 128 and arginine 157 each coordinate orotate.

Belongs to the purine/pyrimidine phosphoribosyltransferase family. PyrE subfamily. In terms of assembly, homodimer. Mg(2+) serves as cofactor.

It carries out the reaction orotidine 5'-phosphate + diphosphate = orotate + 5-phospho-alpha-D-ribose 1-diphosphate. It participates in pyrimidine metabolism; UMP biosynthesis via de novo pathway; UMP from orotate: step 1/2. Catalyzes the transfer of a ribosyl phosphate group from 5-phosphoribose 1-diphosphate to orotate, leading to the formation of orotidine monophosphate (OMP). The polypeptide is Orotate phosphoribosyltransferase (Pseudomonas fluorescens (strain SBW25)).